The chain runs to 393 residues: Cytochrome b (393 aa).

The next 4 membrane-spanning stretches (helical) occupy residues 38 to 58 (FGSL…FLAM), 82 to 104 (WLLR…LHIF), 119 to 139 (VWCL…IGYV), and 185 to 205 (FFSL…LHLA). Positions 88 and 102 each coordinate heme b. 2 residues coordinate heme b: His189 and His203. His208 serves as a coordination point for a ubiquinone. Helical transmembrane passes span 231-251 (FYVK…IWIF), 295-315 (VGGV…PFFK), 327-347 (IYQG…WIGC), and 354-373 (FVTI…AITP).

Belongs to the cytochrome b family. In terms of assembly, the main subunits of complex b-c1 are: cytochrome b, cytochrome c1 and the Rieske protein. Heme b serves as cofactor. Post-translationally, first mitochondrial-encoded protein to be shown to have its N-terminal methionine cleaved off.

The protein resides in the mitochondrion inner membrane. In terms of biological role, component of the ubiquinol-cytochrome c reductase complex (complex III or cytochrome b-c1 complex) that is part of the mitochondrial respiratory chain. The b-c1 complex mediates electron transfer from ubiquinol to cytochrome c. Contributes to the generation of a proton gradient across the mitochondrial membrane that is then used for ATP synthesis. The chain is Cytochrome b (MT-CYB) from Solanum tuberosum (Potato).